The chain runs to 286 residues: ATP synthase gamma chain (286 aa).

Belongs to the ATPase gamma chain family. As to quaternary structure, F-type ATPases have 2 components, CF(1) - the catalytic core - and CF(0) - the membrane proton channel. CF(1) has five subunits: alpha(3), beta(3), gamma(1), delta(1), epsilon(1). CF(0) has three main subunits: a, b and c.

It is found in the cell inner membrane. Its function is as follows. Produces ATP from ADP in the presence of a proton gradient across the membrane. The gamma chain is believed to be important in regulating ATPase activity and the flow of protons through the CF(0) complex. This is ATP synthase gamma chain from Shewanella pealeana (strain ATCC 700345 / ANG-SQ1).